Consider the following 118-residue polypeptide: Large ribosomal subunit protein bL20 (118 aa).

It belongs to the bacterial ribosomal protein bL20 family.

Functionally, binds directly to 23S ribosomal RNA and is necessary for the in vitro assembly process of the 50S ribosomal subunit. It is not involved in the protein synthesizing functions of that subunit. The polypeptide is Large ribosomal subunit protein bL20 (Klebsiella pneumoniae (strain 342)).